The chain runs to 241 residues: Small ribosomal subunit protein uS2 (241 aa).

It belongs to the universal ribosomal protein uS2 family.

In Cronobacter sakazakii (strain ATCC BAA-894) (Enterobacter sakazakii), this protein is Small ribosomal subunit protein uS2.